Reading from the N-terminus, the 253-residue chain is Ras-like protein family member 11A-like (253 aa).

Residues 43–50 (GASNVGKT), 90–97 (DTPCVSLQ), and 157–160 (NKSD) each bind GTP. The disordered stretch occupies residues 213–233 (GNGEKRKGGLHLARPKSPNMQ).

It belongs to the small GTPase superfamily. Ras family.

The protein resides in the nucleus. It is found in the nucleolus. It catalyses the reaction GTP + H2O = GDP + phosphate + H(+). Its function is as follows. Regulator of rDNA transcription. The polypeptide is Ras-like protein family member 11A-like (Danio rerio (Zebrafish)).